A 355-amino-acid chain; its full sequence is UDP-N-acetylglucosamine--N-acetylmuramyl-(pentapeptide) pyrophosphoryl-undecaprenol N-acetylglucosamine transferase (355 aa).

Residues 15-17, Asn-127, Arg-163, Ser-191, Ile-244, 263-268, and Gln-288 contribute to the UDP-N-acetyl-alpha-D-glucosamine site; these read TGG and ALTVSE.

The protein belongs to the glycosyltransferase 28 family. MurG subfamily.

It is found in the cell inner membrane. The catalysed reaction is di-trans,octa-cis-undecaprenyl diphospho-N-acetyl-alpha-D-muramoyl-L-alanyl-D-glutamyl-meso-2,6-diaminopimeloyl-D-alanyl-D-alanine + UDP-N-acetyl-alpha-D-glucosamine = di-trans,octa-cis-undecaprenyl diphospho-[N-acetyl-alpha-D-glucosaminyl-(1-&gt;4)]-N-acetyl-alpha-D-muramoyl-L-alanyl-D-glutamyl-meso-2,6-diaminopimeloyl-D-alanyl-D-alanine + UDP + H(+). The protein operates within cell wall biogenesis; peptidoglycan biosynthesis. Cell wall formation. Catalyzes the transfer of a GlcNAc subunit on undecaprenyl-pyrophosphoryl-MurNAc-pentapeptide (lipid intermediate I) to form undecaprenyl-pyrophosphoryl-MurNAc-(pentapeptide)GlcNAc (lipid intermediate II). The sequence is that of UDP-N-acetylglucosamine--N-acetylmuramyl-(pentapeptide) pyrophosphoryl-undecaprenol N-acetylglucosamine transferase from Salmonella paratyphi B (strain ATCC BAA-1250 / SPB7).